Consider the following 54-residue polypeptide: Ferredoxin (54 aa).

2 consecutive 4Fe-4S ferredoxin-type domains span residues 2-28 (HVIS…EGET) and 29-54 (KYVV…ISAE). [4Fe-4S] cluster contacts are provided by Cys8, Cys11, Cys14, Cys18, Cys36, Cys39, Cys42, and Cys46.

It depends on [4Fe-4S] cluster as a cofactor.

Ferredoxins are iron-sulfur proteins that transfer electrons in a wide variety of metabolic reactions. This is Ferredoxin from Megasphaera elsdenii.